We begin with the raw amino-acid sequence, 477 residues long: Cytochrome P450 716A1 (477 aa).

Residues 2-22 (YMAIMIILFLSSILLSLLLLL) traverse the membrane as a helical segment. Cysteine 424 serves as a coordination point for heme.

Belongs to the cytochrome P450 family. Heme serves as cofactor.

It localises to the membrane. Functionally, possesses triterpene oxidizing activity. Catalyzes the C28 hydroxylation of alpha-amyrin, beta-amyrin, and lupeol, producing uvaol, erythrodiol, and betulin, respectively. Catalyzes the C28 carboxylation of alpha- and beta-amyrin. This is Cytochrome P450 716A1 from Arabidopsis thaliana (Mouse-ear cress).